The sequence spans 185 residues: Elongation factor P (185 aa).

Belongs to the elongation factor P family.

The protein resides in the cytoplasm. Its pathway is protein biosynthesis; polypeptide chain elongation. Involved in peptide bond synthesis. Stimulates efficient translation and peptide-bond synthesis on native or reconstituted 70S ribosomes in vitro. Probably functions indirectly by altering the affinity of the ribosome for aminoacyl-tRNA, thus increasing their reactivity as acceptors for peptidyl transferase. The chain is Elongation factor P from Bacillus velezensis (strain DSM 23117 / BGSC 10A6 / LMG 26770 / FZB42) (Bacillus amyloliquefaciens subsp. plantarum).